A 378-amino-acid polypeptide reads, in one-letter code: Protein KlaB (378 aa).

This sequence belongs to the TelA family.

Functionally, belongs to the kla operon, which is associated with cryptic tellurite resistance, and IncW plasmid fertility inhibition. This chain is Protein KlaB (klaB), found in Escherichia coli.